The following is a 287-amino-acid chain: rRNA adenine N-6-methyltransferase (287 aa).

Over residues 1–13 (MKKKNHKYRGKKL) the composition is skewed to basic residues. The disordered stretch occupies residues 1 to 21 (MKKKNHKYRGKKLNRGESPNF). S-adenosyl-L-methionine contacts are provided by His-25, Met-27, Gly-52, Glu-73, Asp-98, and Asn-114.

Belongs to the class I-like SAM-binding methyltransferase superfamily. rRNA adenine N(6)-methyltransferase family. In terms of assembly, homodimer.

Its function is as follows. Involved in erythromycin resistance. The protein is rRNA adenine N-6-methyltransferase (ermJ) of Bacillus anthracis.